We begin with the raw amino-acid sequence, 436 residues long: Adenylosuccinate synthetase (436 aa).

Residues 21 to 27 (GDEGKGK) and 49 to 51 (GHT) contribute to the GTP site. D22 serves as the catalytic Proton acceptor. Mg(2+)-binding residues include D22 and G49. IMP contacts are provided by residues 22–25 (DEGK), 47–50 (NAGH), T135, R149, Q230, T245, and R309. The active-site Proton donor is the H50. Substrate is bound at residue 305–311 (TTTGRPR). GTP contacts are provided by residues R311, 337–339 (KVD), and 423–425 (SSG).

It belongs to the adenylosuccinate synthetase family. As to quaternary structure, homodimer. The cofactor is Mg(2+).

The protein localises to the cytoplasm. It catalyses the reaction IMP + L-aspartate + GTP = N(6)-(1,2-dicarboxyethyl)-AMP + GDP + phosphate + 2 H(+). Its pathway is purine metabolism; AMP biosynthesis via de novo pathway; AMP from IMP: step 1/2. Functionally, plays an important role in the de novo pathway of purine nucleotide biosynthesis. Catalyzes the first committed step in the biosynthesis of AMP from IMP. This is Adenylosuccinate synthetase from Thermoplasma volcanium (strain ATCC 51530 / DSM 4299 / JCM 9571 / NBRC 15438 / GSS1).